Here is a 391-residue protein sequence, read N- to C-terminus: Nuclear hormone receptor family member nhr-218 (391 aa).

Positions 17 to 93 (PIPCQICTYQ…MGMKAEKIQQ (77 aa)) form a DNA-binding region, nuclear receptor. 2 consecutive NR C4-type zinc fingers follow at residues 20 to 40 (CQIC…CRAC) and 56 to 76 (CKTR…CRLC). Positions 146-391 (SRNYSDSPLT…DNFCNLFAMK (246 aa)) constitute an NR LBD domain.

Belongs to the nuclear hormone receptor family.

The protein localises to the nucleus. Orphan nuclear receptor. This chain is Nuclear hormone receptor family member nhr-218 (nhr-218), found in Caenorhabditis elegans.